The primary structure comprises 293 residues: Diaminopimelate epimerase (293 aa).

The substrate site is built by N17, Q49, and N69. C78 (proton donor) is an active-site residue. Residues 79-80 (GN), N169, N203, and 221-222 (ER) each bind substrate. The active-site Proton acceptor is the C230. 231–232 (GS) serves as a coordination point for substrate.

This sequence belongs to the diaminopimelate epimerase family. As to quaternary structure, homodimer.

Its subcellular location is the cytoplasm. It catalyses the reaction (2S,6S)-2,6-diaminopimelate = meso-2,6-diaminopimelate. It functions in the pathway amino-acid biosynthesis; L-lysine biosynthesis via DAP pathway; DL-2,6-diaminopimelate from LL-2,6-diaminopimelate: step 1/1. Catalyzes the stereoinversion of LL-2,6-diaminopimelate (L,L-DAP) to meso-diaminopimelate (meso-DAP), a precursor of L-lysine and an essential component of the bacterial peptidoglycan. The polypeptide is Diaminopimelate epimerase (Methylobacterium sp. (strain 4-46)).